Consider the following 190-residue polypeptide: ATP synthase subunit delta (190 aa).

The protein belongs to the ATPase delta chain family. As to quaternary structure, F-type ATPases have 2 components, F(1) - the catalytic core - and F(0) - the membrane proton channel. F(1) has five subunits: alpha(3), beta(3), gamma(1), delta(1), epsilon(1). F(0) has three main subunits: a(1), b(2) and c(10-14). The alpha and beta chains form an alternating ring which encloses part of the gamma chain. F(1) is attached to F(0) by a central stalk formed by the gamma and epsilon chains, while a peripheral stalk is formed by the delta and b chains.

It is found in the cell inner membrane. In terms of biological role, f(1)F(0) ATP synthase produces ATP from ADP in the presence of a proton or sodium gradient. F-type ATPases consist of two structural domains, F(1) containing the extramembraneous catalytic core and F(0) containing the membrane proton channel, linked together by a central stalk and a peripheral stalk. During catalysis, ATP synthesis in the catalytic domain of F(1) is coupled via a rotary mechanism of the central stalk subunits to proton translocation. Functionally, this protein is part of the stalk that links CF(0) to CF(1). It either transmits conformational changes from CF(0) to CF(1) or is implicated in proton conduction. The chain is ATP synthase subunit delta from Beijerinckia indica subsp. indica (strain ATCC 9039 / DSM 1715 / NCIMB 8712).